We begin with the raw amino-acid sequence, 356 residues long: sn-glycerol-3-phosphate import ATP-binding protein UgpC (356 aa).

The ABC transporter domain maps to 4–235 (LKLQAVTKSW…PASRFVASFI (232 aa)). 37-44 (GPSGCGKS) contacts ATP.

The protein belongs to the ABC transporter superfamily. sn-glycerol-3-phosphate importer (TC 3.A.1.1.3) family. In terms of assembly, the complex is composed of two ATP-binding proteins (UgpC), two transmembrane proteins (UgpA and UgpE) and a solute-binding protein (UgpB).

Its subcellular location is the cell inner membrane. The catalysed reaction is sn-glycerol 3-phosphate(out) + ATP + H2O = sn-glycerol 3-phosphate(in) + ADP + phosphate + H(+). Functionally, part of the ABC transporter complex UgpBAEC involved in sn-glycerol-3-phosphate (G3P) import. Responsible for energy coupling to the transport system. The sequence is that of sn-glycerol-3-phosphate import ATP-binding protein UgpC from Salmonella typhimurium (strain LT2 / SGSC1412 / ATCC 700720).